We begin with the raw amino-acid sequence, 1338 residues long: Aldehyde oxidase (1338 aa).

The 88-residue stretch at 5–92 folds into the 2Fe-2S ferredoxin-type domain; it reads SELLFYVNGR…GAAVTTVEGI (88 aa). [2Fe-2S] cluster is bound by residues cysteine 44, cysteine 49, cysteine 52, and cysteine 74. A Mo-molybdopterin-binding site is contributed by glutamine 113. Cysteine 114, cysteine 117, cysteine 149, and cysteine 151 together coordinate [2Fe-2S] cluster. Mo-molybdopterin is bound at residue cysteine 151. The region spanning 236–421 is the FAD-binding PCMH-type domain; sequence FGSERMMWFS…VSVNIPYSRK (186 aa). FAD contacts are provided by residues 264–271, alanine 345, serine 354, histidine 358, aspartate 367, and leucine 411; that span reads VIMGNTSV. Residues 806–807 and methionine 1047 each bind Mo-molybdopterin; that span reads AF. A Phosphoserine modification is found at serine 1068. Mo-molybdopterin contacts are provided by residues 1088–1091, glutamine 1203, and leucine 1268; that span reads GSVV. Residue glutamate 1270 is the Proton acceptor; for azaheterocycle hydroxylase activity of the active site.

This sequence belongs to the xanthine dehydrogenase family. Homodimer. [2Fe-2S] cluster is required as a cofactor. FAD serves as cofactor. The cofactor is Mo-molybdopterin. In terms of tissue distribution, abundant in liver, expressed in adipose tissue and at lower levels in lung, skeletal muscle, pancreas. In contrast to mice, no significant gender difference in AOX1 expression level (at protein level).

The protein localises to the cytoplasm. The enzyme catalyses an aldehyde + O2 + H2O = a carboxylate + H2O2 + H(+). It carries out the reaction retinal + O2 + H2O = retinoate + H2O2 + H(+). With respect to regulation, is very potently inhibited by raloxifene. Also inhibited by estradiol, ethinyl estradiol, hydralazine, menadione, isovanillin and thioridazine. Not inhibited by allopurinol, a xanthine dehydrogenase potent inhibitor. Oxidase with broad substrate specificity, oxidizing aromatic azaheterocycles, such as N1-methylnicotinamide, N-methylphthalazinium and phthalazine, as well as aldehydes, such as benzaldehyde, retinal, pyridoxal, and vanillin. Plays a key role in the metabolism of xenobiotics and drugs containing aromatic azaheterocyclic substituents. Participates in the bioactivation of prodrugs such as famciclovir, catalyzing the oxidation step from 6-deoxypenciclovir to penciclovir, which is a potent antiviral agent. Is probably involved in the regulation of reactive oxygen species homeostasis. May be a prominent source of superoxide generation via the one-electron reduction of molecular oxygen. May also catalyze nitric oxide (NO) production via the reduction of nitrite to NO with NADH or aldehyde as electron donor. May play a role in adipogenesis. This chain is Aldehyde oxidase, found in Homo sapiens (Human).